Consider the following 133-residue polypeptide: Small ribosomal subunit protein eS8 (133 aa).

Residues 1 to 34 (MGVWHGRSLRKPTGGRIRPHRKKRKFEMGNPPTE) form a disordered region.

This sequence belongs to the eukaryotic ribosomal protein eS8 family. In terms of assembly, part of the 30S ribosomal subunit.

The sequence is that of Small ribosomal subunit protein eS8 from Methanopyrus kandleri (strain AV19 / DSM 6324 / JCM 9639 / NBRC 100938).